The primary structure comprises 91 residues: Protein LURE 1.3 (91 aa).

The first 20 residues, 1-20 (MKLPFIFLITLLIFVSSCTS), serve as a signal peptide directing secretion. N-linked (GlcNAc...) asparagine glycosylation occurs at N24. 3 cysteine pairs are disulfide-bonded: C59–C76, C62–C83, and C66–C85. The tract at residues 68–88 (RRGKYIRTCSFERKLCRCSIS) is PRK6 binding.

Belongs to the DEFL family. As to quaternary structure, binds to PRK6 LRRs. As to expression, expressed in the pistil. Detected exclusively in the synergid cells.

The protein localises to the secreted. Pollen tube attractants guiding pollen tubes to the ovular micropyle. Attracts pollen tubes from both A.thaliana and A.lyrata. In Arabidopsis thaliana (Mouse-ear cress), this protein is Protein LURE 1.3.